Reading from the N-terminus, the 202-residue chain is Snake venom metalloproteinase fibrolase (202 aa).

One can recognise a Peptidase M12B domain in the interval 6–202; that stretch reads RYIELVIVAD…HNPQCILNQP (197 aa). Glutamate 9 contacts Ca(2+). The N-linked (GlcNAc...) asparagine glycan is linked to asparagine 25. Residue aspartate 93 participates in Ca(2+) binding. Intrachain disulfides connect cysteine 117–cysteine 197, cysteine 157–cysteine 181, and cysteine 159–cysteine 164. A Zn(2+)-binding site is contributed by histidine 142. Glutamate 143 is an active-site residue. Residues histidine 146 and histidine 152 each coordinate Zn(2+). The Ca(2+) site is built by cysteine 197 and asparagine 200.

This sequence belongs to the venom metalloproteinase (M12B) family. P-I subfamily. Monomer. Zn(2+) serves as cofactor. In terms of processing, glycosylated. In terms of tissue distribution, expressed by the venom gland.

It localises to the secreted. The enzyme catalyses Hydrolysis of 14-Ala-|-Leu-15 in insulin B chain and 413-Lys-|-Leu-414 in alpha-chain of fibrinogen.. Its activity is regulated as follows. Activated by calcium and magnesium ions. Inhibited by EDTA, DTT and L-cysteine. Activity is not affected by PMSF or heparin. Functionally, has fibrino(geno)lytic activity on the alpha and beta chains of fibrinogen (FGA and FGB). Inhibits human ADP- and collagen-induced platelet aggregation on platelet-rich plasma but does not affect the thrombin-induced aggregation of rabbit washed platelets. Slightly degrades plasminogen. The chain is Snake venom metalloproteinase fibrolase from Macrovipera lebetinus (Levantine viper).